The following is a 101-amino-acid chain: UPF0235 protein CJA_0091 (101 aa).

This sequence belongs to the UPF0235 family.

The sequence is that of UPF0235 protein CJA_0091 from Cellvibrio japonicus (strain Ueda107) (Pseudomonas fluorescens subsp. cellulosa).